We begin with the raw amino-acid sequence, 136 residues long: ATP synthase epsilon chain (136 aa).

The interval 112–136 (GNSADKLKAKESLNKARARSQAVGE) is disordered. Positions 116 to 125 (DKLKAKESLN) are enriched in basic and acidic residues.

The protein belongs to the ATPase epsilon chain family. F-type ATPases have 2 components, CF(1) - the catalytic core - and CF(0) - the membrane proton channel. CF(1) has five subunits: alpha(3), beta(3), gamma(1), delta(1), epsilon(1). CF(0) has three main subunits: a, b and c.

It localises to the cellular thylakoid membrane. Produces ATP from ADP in the presence of a proton gradient across the membrane. This is ATP synthase epsilon chain from Prochlorococcus marinus (strain SARG / CCMP1375 / SS120).